The chain runs to 501 residues: 7-alpha-hydroxycholest-4-en-3-one 12-alpha-hydroxylase (501 aa).

Residues 1 to 21 (MVLWGPVLGALLVVIAGYLCL) traverse the membrane as a helical segment. Ser-326 is modified (phosphoserine). Cys-440 is a binding site for heme.

This sequence belongs to the cytochrome P450 family. Heme serves as cofactor. As to expression, liver.

It is found in the endoplasmic reticulum membrane. Its subcellular location is the microsome membrane. The catalysed reaction is 7alpha-hydroxycholest-4-en-3-one + reduced [NADPH--hemoprotein reductase] + O2 = 7alpha,12alpha-dihydroxycholest-4-en-3-one + oxidized [NADPH--hemoprotein reductase] + H2O + H(+). It catalyses the reaction 5beta-cholestane-3alpha,7alpha-diol + reduced [NADPH--hemoprotein reductase] + O2 = 5beta-cholestane-3alpha,7alpha,12alpha-triol + oxidized [NADPH--hemoprotein reductase] + H2O + H(+). It carries out the reaction chenodeoxycholate + reduced [NADPH--hemoprotein reductase] + O2 = cholate + oxidized [NADPH--hemoprotein reductase] + H2O + H(+). It participates in lipid metabolism; bile acid biosynthesis. In terms of biological role, a cytochrome P450 monooxygenase involved in primary bile acid biosynthesis. Catalyzes the 12alpha-hydroxylation of 7alpha-hydroxy-4-cholesten-3-one, an intermediate metabolite in cholic acid biosynthesis. Controls biliary balance of cholic acid and chenodeoxycholic acid, ultimately regulating the intestinal absorption of dietary lipids. Mechanistically, uses molecular oxygen inserting one oxygen atom into a substrate, and reducing the second into a water molecule, with two electrons provided by NADPH via cytochrome P450 reductase (CPR; NADPH--hemoprotein reductase). The chain is 7-alpha-hydroxycholest-4-en-3-one 12-alpha-hydroxylase from Homo sapiens (Human).